The following is a 106-amino-acid chain: uncharacterized protein (106 aa).

The next 2 helical transmembrane spans lie at 46–68 (LLQE…ILAF) and 73–92 (AVFI…LIAA).

It is found in the cell membrane. This is an uncharacterized protein from Bacillus subtilis (strain 168).